Reading from the N-terminus, the 37-residue chain is MKVRSSVKKICEKCKIVRRGGRVFVICENPRHKQKQG.

Belongs to the bacterial ribosomal protein bL36 family.

The sequence is that of Large ribosomal subunit protein bL36 from Dictyoglomus thermophilum (strain ATCC 35947 / DSM 3960 / H-6-12).